Consider the following 360-residue polypeptide: Phospho-N-acetylmuramoyl-pentapeptide-transferase (360 aa).

The next 10 membrane-spanning stretches (helical) occupy residues 21–41 (YLSF…LWMG), 73–93 (TMGG…WANL), 94–114 (SNPY…VGFV), 132–152 (WKYF…YAYG), 168–188 (VMPQ…VGTS), 199–219 (GLAI…AWAT), 236–256 (ASEL…FLWF), 263–283 (VFMG…IAVL), 288–308 (LVLV…ILQV), and 338–358 (VIVR…ATLK).

It belongs to the glycosyltransferase 4 family. MraY subfamily. It depends on Mg(2+) as a cofactor.

It localises to the cell inner membrane. It catalyses the reaction UDP-N-acetyl-alpha-D-muramoyl-L-alanyl-gamma-D-glutamyl-meso-2,6-diaminopimeloyl-D-alanyl-D-alanine + di-trans,octa-cis-undecaprenyl phosphate = di-trans,octa-cis-undecaprenyl diphospho-N-acetyl-alpha-D-muramoyl-L-alanyl-D-glutamyl-meso-2,6-diaminopimeloyl-D-alanyl-D-alanine + UMP. It functions in the pathway cell wall biogenesis; peptidoglycan biosynthesis. In terms of biological role, catalyzes the initial step of the lipid cycle reactions in the biosynthesis of the cell wall peptidoglycan: transfers peptidoglycan precursor phospho-MurNAc-pentapeptide from UDP-MurNAc-pentapeptide onto the lipid carrier undecaprenyl phosphate, yielding undecaprenyl-pyrophosphoryl-MurNAc-pentapeptide, known as lipid I. This chain is Phospho-N-acetylmuramoyl-pentapeptide-transferase, found in Vibrio vulnificus (strain CMCP6).